We begin with the raw amino-acid sequence, 215 residues long: Cytochrome b6 (215 aa).

The helical transmembrane segment at 32-52 threads the bilayer; it reads IFYCFGGIVFTCFLVQVATGF. Position 35 (cysteine 35) interacts with heme c. Histidine 86 and histidine 100 together coordinate heme b. Transmembrane regions (helical) follow at residues 90-110, 116-136, and 186-206; these read ASMMVMMLVLHVFRVYLTGGF, LTWVTGVILAVVTVSFGVTGY, and AHTFVLPLAAAVLMLTHFLMI. Residues histidine 187 and histidine 202 each contribute to the heme b site.

Belongs to the cytochrome b family. PetB subfamily. As to quaternary structure, the 4 large subunits of the cytochrome b6-f complex are cytochrome b6, subunit IV (17 kDa polypeptide, PetD), cytochrome f and the Rieske protein, while the 4 small subunits are PetG, PetL, PetM and PetN. The complex functions as a dimer. Heme b is required as a cofactor. The cofactor is heme c.

Its subcellular location is the plastid. It is found in the chloroplast thylakoid membrane. Functionally, component of the cytochrome b6-f complex, which mediates electron transfer between photosystem II (PSII) and photosystem I (PSI), cyclic electron flow around PSI, and state transitions. The chain is Cytochrome b6 from Skeletonema costatum (Marine centric diatom).